The primary structure comprises 337 residues: tRNA pseudouridine synthase D (337 aa).

The active-site Nucleophile is the D77. The TRUD domain maps to G152–E308.

It belongs to the pseudouridine synthase TruD family.

The enzyme catalyses uridine(13) in tRNA = pseudouridine(13) in tRNA. Its function is as follows. Responsible for synthesis of pseudouridine from uracil-13 in transfer RNAs. The sequence is that of tRNA pseudouridine synthase D from Mannheimia succiniciproducens (strain KCTC 0769BP / MBEL55E).